Here is a 311-residue protein sequence, read N- to C-terminus: Glycerol-3-phosphate dehydrogenase [NAD(P)+] (311 aa).

NADPH-binding residues include W11, R30, R31, and K95. Sn-glycerol 3-phosphate contacts are provided by K95, G123, and S125. Residue A127 coordinates NADPH. 5 residues coordinate sn-glycerol 3-phosphate: K177, D230, S240, R241, and N242. K177 serves as the catalytic Proton acceptor. R241 provides a ligand contact to NADPH. Residues V265 and E267 each coordinate NADPH.

This sequence belongs to the NAD-dependent glycerol-3-phosphate dehydrogenase family.

It localises to the cytoplasm. It carries out the reaction sn-glycerol 3-phosphate + NAD(+) = dihydroxyacetone phosphate + NADH + H(+). The catalysed reaction is sn-glycerol 3-phosphate + NADP(+) = dihydroxyacetone phosphate + NADPH + H(+). It functions in the pathway membrane lipid metabolism; glycerophospholipid metabolism. Catalyzes the reduction of the glycolytic intermediate dihydroxyacetone phosphate (DHAP) to sn-glycerol 3-phosphate (G3P), the key precursor for phospholipid synthesis. This is Glycerol-3-phosphate dehydrogenase [NAD(P)+] from Bartonella bacilliformis (strain ATCC 35685 / KC583 / Herrer 020/F12,63).